The sequence spans 233 residues: Small ribosomal subunit protein uS3 (233 aa).

Residues 39–107 enclose the KH type-2 domain; sequence VRQFLNKELE…PAQINIAEVR (69 aa).

Belongs to the universal ribosomal protein uS3 family. Part of the 30S ribosomal subunit. Forms a tight complex with proteins S10 and S14.

Functionally, binds the lower part of the 30S subunit head. Binds mRNA in the 70S ribosome, positioning it for translation. The protein is Small ribosomal subunit protein uS3 of Edwardsiella ictaluri (strain 93-146).